Here is a 268-residue protein sequence, read N- to C-terminus: Proliferating cell nuclear antigen (268 aa).

A DNA-binding region spans residues 61 to 80; it reads RCDRNPSMGMNLNNMAKMLK.

This sequence belongs to the PCNA family.

The protein localises to the nucleus. In terms of biological role, this protein is an auxiliary protein of DNA polymerase delta and is involved in the control of eukaryotic DNA replication by increasing the polymerase's processibility during elongation of the leading strand. The sequence is that of Proliferating cell nuclear antigen from Catharanthus roseus (Madagascar periwinkle).